The sequence spans 196 residues: Corticoliberin (196 aa).

An N-terminal signal peptide occupies residues 1–24 (MRLPLLVSAGVLLVALLPCPPCRA). A propeptide spanning residues 25–153 (LLSRGPVPGA…HQEAPERERR (129 aa)) is cleaved from the precursor. 3 disordered regions span residues 32 to 61 (PGAR…QPQA), 85 to 105 (APLS…PSPE), and 136 to 158 (GARN…EEPP). Low complexity-rich tracts occupy residues 38-47 (PQHPQPLDFF) and 85-104 (APLS…RPSP). The span at 146-156 (EAPERERRSEE) shows a compositional bias: basic and acidic residues. Ile-194 bears the Isoleucine amide mark.

It belongs to the sauvagine/corticotropin-releasing factor/urotensin I family. Interacts (via C-terminus) with CRFR1 (via N-terminal extracellular domain). As to expression, produced by the hypothalamus and placenta.

The protein localises to the secreted. Hormone regulating the release of corticotropin from pituitary gland. Induces NLRP6 in intestinal epithelial cells, hence may influence gut microbiota profile. The polypeptide is Corticoliberin (CRH) (Homo sapiens (Human)).